The following is a 115-amino-acid chain: Phosphoribosyl-AMP cyclohydrolase (115 aa).

Asp80 contacts Mg(2+). Cys81 lines the Zn(2+) pocket. Mg(2+)-binding residues include Asp82 and Asp84. Cys97 and Cys104 together coordinate Zn(2+).

Belongs to the PRA-CH family. In terms of assembly, homodimer. Mg(2+) is required as a cofactor. The cofactor is Zn(2+).

It localises to the cytoplasm. It carries out the reaction 1-(5-phospho-beta-D-ribosyl)-5'-AMP + H2O = 1-(5-phospho-beta-D-ribosyl)-5-[(5-phospho-beta-D-ribosylamino)methylideneamino]imidazole-4-carboxamide. Its pathway is amino-acid biosynthesis; L-histidine biosynthesis; L-histidine from 5-phospho-alpha-D-ribose 1-diphosphate: step 3/9. Catalyzes the hydrolysis of the adenine ring of phosphoribosyl-AMP. The polypeptide is Phosphoribosyl-AMP cyclohydrolase (Mycobacterium bovis (strain ATCC BAA-935 / AF2122/97)).